The chain runs to 199 residues: ATP-dependent Clp protease proteolytic subunit (199 aa).

The active-site Nucleophile is the S102. The active site involves H127.

Belongs to the peptidase S14 family. In terms of assembly, fourteen ClpP subunits assemble into 2 heptameric rings which stack back to back to give a disk-like structure with a central cavity, resembling the structure of eukaryotic proteasomes.

Its subcellular location is the cytoplasm. It catalyses the reaction Hydrolysis of proteins to small peptides in the presence of ATP and magnesium. alpha-casein is the usual test substrate. In the absence of ATP, only oligopeptides shorter than five residues are hydrolyzed (such as succinyl-Leu-Tyr-|-NHMec, and Leu-Tyr-Leu-|-Tyr-Trp, in which cleavage of the -Tyr-|-Leu- and -Tyr-|-Trp bonds also occurs).. Its function is as follows. Cleaves peptides in various proteins in a process that requires ATP hydrolysis. Has a chymotrypsin-like activity. Plays a major role in the degradation of misfolded proteins. The protein is ATP-dependent Clp protease proteolytic subunit of Pseudothermotoga lettingae (strain ATCC BAA-301 / DSM 14385 / NBRC 107922 / TMO) (Thermotoga lettingae).